The primary structure comprises 451 residues: Phosphoglucosamine mutase (451 aa).

The active-site Phosphoserine intermediate is the S104. Positions 104, 249, 251, and 253 each coordinate Mg(2+). Residue S104 is modified to Phosphoserine.

Belongs to the phosphohexose mutase family. Mg(2+) serves as cofactor. In terms of processing, activated by phosphorylation.

The enzyme catalyses alpha-D-glucosamine 1-phosphate = D-glucosamine 6-phosphate. In terms of biological role, catalyzes the conversion of glucosamine-6-phosphate to glucosamine-1-phosphate. This chain is Phosphoglucosamine mutase, found in Psychrobacter sp. (strain PRwf-1).